The primary structure comprises 208 residues: Large ribosomal subunit protein uL3 (208 aa).

Belongs to the universal ribosomal protein uL3 family. In terms of assembly, part of the 50S ribosomal subunit. Forms a cluster with proteins L14 and L19.

One of the primary rRNA binding proteins, it binds directly near the 3'-end of the 23S rRNA, where it nucleates assembly of the 50S subunit. The sequence is that of Large ribosomal subunit protein uL3 from Salinibacter ruber (strain DSM 13855 / M31).